The sequence spans 84 residues: uncharacterized protein (84 aa).

A helical membrane pass occupies residues Ala-7 to Leu-23.

The protein localises to the membrane. This is an uncharacterized protein from Haemophilus influenzae (strain ATCC 51907 / DSM 11121 / KW20 / Rd).